We begin with the raw amino-acid sequence, 979 residues long: Collagen alpha-2(I) chain (979 aa).

Residues S1–A979 form a disordered region. Residues P10, P13, P35, and P41 each carry the 4-hydroxyproline modification. The span at L28–P41 shows a compositional bias: low complexity. K88 is subject to 5-hydroxylysine; alternate. K88 carries O-linked (Gal...) hydroxylysine; alternate glycosylation. Low complexity predominate over residues V128–P157. Positions G256–G265 are enriched in gly residues. Residues S266–S276 are compositionally biased toward low complexity. The span at G298 to G307 shows a compositional bias: gly residues. 2 positions are modified to 4-hydroxyproline: P341 and P344. The segment covering G434 to G443 has biased composition (gly residues). Low complexity-rich tracts occupy residues P490–P507 and E519–A529. Positions G530–G548 are enriched in gly residues. Composition is skewed to low complexity over residues R570–S599 and V606–A626. The segment covering K627 to K636 has biased composition (basic and acidic residues). Over residues P644–A654 the composition is skewed to low complexity. The segment covering G664–G673 has biased composition (gly residues). Residues T675 to T684 are compositionally biased toward low complexity. Residues G721–G730 are compositionally biased toward gly residues. Low complexity-rich tracts occupy residues S738–P765 and L773–P783. Residues G784–L802 show a composition bias toward gly residues. Composition is skewed to low complexity over residues Y811–A833 and E841–P856. The span at R866–P877 shows a compositional bias: basic and acidic residues. The segment covering G951–P961 has biased composition (pro residues).

This sequence belongs to the fibrillar collagen family. As to quaternary structure, trimers of one alpha 2(I) and two alpha 1(I) chains. Interacts (via C-terminus) with TMEM131 (via PapD-L domain); the interaction is direct and is involved in assembly and TRAPPIII ER-to-Golgi transport complex-dependent secretion of collagen. Prolines at the third position of the tripeptide repeating unit (G-X-Y) are hydroxylated in some or all of the chains. In terms of tissue distribution, expressed in bones.

It localises to the secreted. The protein localises to the extracellular space. The protein resides in the extracellular matrix. In terms of biological role, type I collagen is a member of group I collagen (fibrillar forming collagen). The sequence is that of Collagen alpha-2(I) chain from Neocnus dousman (Slow ground sloth).